The sequence spans 345 residues: Viral Fc-gamma receptor-like protein UL119 (345 aa).

The N-terminal stretch at 1–23 is a signal peptide; that stretch reads MCSVLAIALVVALLGDMHPGVKS. The disordered stretch occupies residues 23–42; sequence SSTTSAVTSPSNTTVTSTTS. Residues 24–294 lie on the Virion surface side of the membrane; it reads STTSAVTSPS…KSDPLFEDRL (271 aa). N-linked (GlcNAc...) asparagine; by host glycosylation is found at Asn-34, Asn-48, Asn-95, Asn-104, Asn-148, Asn-179, Asn-198, Asn-217, Asn-225, Asn-241, Asn-244, and Asn-260. The region spanning 91-190 is the Ig-like V-type domain; it reads QVSLNATCKV…TWDLFTYPIY (100 aa). A helical transmembrane segment spans residues 295-317; that stretch reads LAYGVLAFLVFMVIILLYVTYML. Residues 318–345 lie on the Intravirion side of the membrane; the sequence is ARRRDWSYKRLEEPVEEKKHPVPYFKQW.

It is found in the virion membrane. Its function is as follows. Serves as a receptor for the Fc part of human IgG. May thus be involved in interfering with host Ig-mediated immune responses. In Human cytomegalovirus (strain AD169) (HHV-5), this protein is Viral Fc-gamma receptor-like protein UL119 (UL119/UL118).